Reading from the N-terminus, the 1979-residue chain is Repetitive organellar protein (1979 aa).

Over residues 1–12 (MVFTFKNKKKKK) the composition is skewed to basic residues. 2 disordered regions span residues 1–42 (MVFT…DSWY) and 54–116 (TKYK…NNYS). Composition is skewed to basic and acidic residues over residues 13 to 24 (EASSDKVSKESF) and 31 to 42 (NNEKREKSDSWY). The segment covering 68 to 114 (EDIINNNNNNNNDNNNDNNNDNNNDNNNDNNNDNNNENNNDNNNFNN) has biased composition (low complexity). Coiled coils occupy residues 127-366 (DNEL…LKDE), 412-666 (LKVY…EMEL), 693-876 (LKES…KKKQ), 992-1094 (KKKH…YKTI), 1126-1307 (VDKI…MNIK), and 1398-1467 (IANY…LTSQ).

Its subcellular location is the host cell membrane. In Plasmodium falciparum (isolate 3D7), this protein is Repetitive organellar protein.